We begin with the raw amino-acid sequence, 431 residues long: 3-phosphoshikimate 1-carboxyvinyltransferase (431 aa).

Residues Lys-22, Ser-23, and Arg-27 each coordinate 3-phosphoshikimate. Lys-22 serves as a coordination point for phosphoenolpyruvate. Positions 94 and 122 each coordinate phosphoenolpyruvate. Positions 167, 169, 315, and 342 each coordinate 3-phosphoshikimate. A phosphoenolpyruvate-binding site is contributed by Gln-169. Asp-315 serves as the catalytic Proton acceptor. Residues Arg-346 and Arg-388 each contribute to the phosphoenolpyruvate site.

This sequence belongs to the EPSP synthase family. Monomer.

It localises to the cytoplasm. It carries out the reaction 3-phosphoshikimate + phosphoenolpyruvate = 5-O-(1-carboxyvinyl)-3-phosphoshikimate + phosphate. The protein operates within metabolic intermediate biosynthesis; chorismate biosynthesis; chorismate from D-erythrose 4-phosphate and phosphoenolpyruvate: step 6/7. Its function is as follows. Catalyzes the transfer of the enolpyruvyl moiety of phosphoenolpyruvate (PEP) to the 5-hydroxyl of shikimate-3-phosphate (S3P) to produce enolpyruvyl shikimate-3-phosphate and inorganic phosphate. The sequence is that of 3-phosphoshikimate 1-carboxyvinyltransferase from Pelobacter propionicus (strain DSM 2379 / NBRC 103807 / OttBd1).